Reading from the N-terminus, the 119-residue chain is Probable cyclase otaY (119 aa).

It belongs to the aurE cyclase family.

Its pathway is mycotoxin biosynthesis. Functionally, probable cyclase; part of the gene cluster that mediates the biosynthesis of ochratoxin A (OTA), a mycotoxin composed of a chlorinated type I polyketide dihydroisocoumarin moiety linked to L-phenylalanine, and demonstrated to have nephrotoxic, immunotoxic, genotoxic, neurotoxic, and teratogenic properties. OtaY is probably involved in the polyketide cyclization. The pathway begins with the highly reducing polyketide synthase otaA that catalyzes the formation of the isocoumarin group during the initial stages of biosynthesis, starting from one acetate and 4 malonate units, to originate the characteristic pentaketide skeleton 7-methylmellein (7-MM) of the OTA molecule. The newly identified cyclase otaY might be involved in the polyketide cyclization reaction during the initial steps of the OTA biosynthesis. 7-MM is then oxidized into 7-carboxymellein (also called ochratoxin beta) by the cytochrome P450 monooxygenase otaC. The NRPS encoded by the otaB gene is involved in the linking of phenylalanine to the dihydroisocoumarin ring. The reaction catalyzed by NRPS results in the production of ochratoxin B (OTB), which is the non-chlorinated analog of OTA and which subsequently serves as the substrate of the halogenase otaD for chlorination activity to form the final molecular structure of OTA, containing a chlorine atom in the C-5 position of the molecule. The chain is Probable cyclase otaY from Aspergillus niger (strain ATCC MYA-4892 / CBS 513.88 / FGSC A1513).